Reading from the N-terminus, the 1226-residue chain is MNPRQGYSLSGYYTHPFQGYEHRQLRYQQPGPGSSPSSFLLKQIEFLKGQLPEAPVIGKQTPSLPPSLPGLRPRFPVLLASSTRGRQVDIRGVPRGVHLRSQGLQRGFQHPSPRGRSLPQRGVDCLSSHFQELSIYQDQEQRILKFLEELGEGKATTAHDLSGKLGTPKKEINRVLYSLAKKGKLQKEAGTPPLWKIAVSTQAWNQHSGVVRPDGHSQGAPNSDPSLEPEDRNSTSVSEDLLEPFIAVSAQAWNQHSGVVRPDSHSQGSPNSDPGLEPEDSNSTSALEDPLEFLDMAEIKEKICDYLFNVSDSSALNLAKNIGLTKARDINAVLIDMERQGDVYRQGTTPPIWHLTDKKRERMQIKRNTNSVPETAPAAIPETKRNAEFLTCNIPTSNASNNMVTTEKVENGQEPVIKLENRQEARPEPARLKPPVHYNGPSKAGYVDFENGQWATDDIPDDLNSIRAAPGEFRAIMEMPSFYSHGLPRCSPYKKLTECQLKNPISGLLEYAQFASQTCEFNMIEQSGPPHEPRFKFQVVINGREFPPAEAGSKKVAKQDAAMKAMTILLEEAKAKDSGKSEESSHYSTEKESEKTAESQTPTPSATSFFSGKSPVTTLLECMHKLGNSCEFRLLSKEGPAHEPKFQYCVAVGAQTFPSVSAPSKKVAKQMAAEEAMKALHGEATNSMASDNQPEGMISESLDNLESMMPNKVRKIGELVRYLNTNPVGGLLEYARSHGFAAEFKLVDQSGPPHEPKFVYQAKVGGRWFPAVCAHSKKQGKQEAADAALRVLIGENEKAERMGFTEVTPVTGASLRRTMLLLSRSPEAQPKTLPLTGSTFHDQIAMLSHRCFNTLTNSFQPSLLGRKILAAIIMKKDSEDMGVVVSLGTGNRCVKGDSLSLKGETVNDCHAEIISRRGFIRFLYSELMKYNSQTAKDSIFEPAKGGEKLQIKKTVSFHLYISTAPCGDGALFDKSCSDRAMESTESRHYPVFENPKQGKLRTKVENGEGTIPVESSDIVPTWDGIRLGERLRTMSCSDKILRWNVLGLQGALLTHFLQPIYLKSVTLGYLFSQGHLTRAICCRVTRDGSAFEDGLRHPFIVNHPKVGRVSIYDSKRQSGKTKETSVNWCLADGYDLEILDGTRGTVDGPRNELSRVSKKNIFLLFKKLCSFRYRRDLLRLSYGEAKKAARDYETAKNYFKKGLKDMGYGNWISKPQEEKNFYLCPV.

R26 is subject to Asymmetric dimethylarginine. Positions 133 to 199 (LSIYQDQEQR…GTPPLWKIAV (67 aa)) constitute a Z-binding 1 domain. An interaction with Z-DNA region spans residues 133-202 (LSIYQDQEQR…PLWKIAVSTQ (70 aa)). Disordered stretches follow at residues 208-238 (SGVV…TSVS) and 258-286 (GVVR…STSA). A Phosphoserine modification is found at S285. Residues 293–357 (FLDMAEIKEK…TTPPIWHLTD (65 aa)) enclose the Z-binding 2 domain. Residues K384 and K408 each participate in a glycyl lysine isopeptide (Lys-Gly) (interchain with G-Cter in SUMO2) cross-link. Residue K418 forms a Glycyl lysine isopeptide (Lys-Gly) (interchain with G-Cter in SUMO); alternate linkage. K418 participates in a covalent cross-link: Glycyl lysine isopeptide (Lys-Gly) (interchain with G-Cter in SUMO1); alternate. K418 is covalently cross-linked (Glycyl lysine isopeptide (Lys-Gly) (interchain with G-Cter in SUMO2); alternate). S481 carries the post-translational modification Phosphoserine. Positions 503–571 (NPISGLLEYA…AMKAMTILLE (69 aa)) constitute a DRBM 1 domain. The segment covering 574–597 (KAKDSGKSEESSHYSTEKESEKTA) has biased composition (basic and acidic residues). Residues 574 to 610 (KAKDSGKSEESSHYSTEKESEKTAESQTPTPSATSFF) are disordered. Residue K580 forms a Glycyl lysine isopeptide (Lys-Gly) (interchain with G-Cter in SUMO2) linkage. The segment covering 600 to 610 (QTPTPSATSFF) has biased composition (polar residues). Phosphothreonine occurs at positions 601 and 603. A phosphoserine mark is found at S614, S629, and S636. The DRBM 2 domain maps to 614–682 (SPVTTLLECM…AEEAMKALHG (69 aa)). Residues 716 to 725 (IGELVRYLNT) form an N-terminal extension of DRBM 3 and constituent of a bi-partite nuclear localization signal region. One can recognise a DRBM 3 domain in the interval 726-794 (NPVGGLLEYA…ADAALRVLIG (69 aa)). Positions 795–801 (ENEKAER) are C-terminal extension of DRBM 3 and constituent of a bi-partite nuclear localization signal. T808 carries the phosphothreonine modification. Phosphoserine occurs at positions 814, 823, and 825. Residue K875 forms a Glycyl lysine isopeptide (Lys-Gly) (interchain with G-Cter in SUMO2) linkage. The region spanning 886-1221 (SLGTGNRCVK…ISKPQEEKNF (336 aa)) is the A to I editase domain. H910 is a binding site for Zn(2+). The active-site Proton donor is the E912. The Zn(2+) site is built by C966 and C1036.

Homodimer. Homodimerization is essential for its catalytic activity. Isoform 5 can form heterodimers with ADARB1/ADAR2. Isoform 1 interacts with ILF2/NF45 and ILF3/NF90. Binding to ILF3/NF90 up-regulates ILF3-mediated gene expression. Isoform 1 and isoform 5 (via DRBM 3 domain) interact with TNPO1. Isoform 5 (via DRBM domains) interacts with XPO5. Isoform 1 and isoform 5 can interact with EIF2AK2/PKR and UPF1. Sumoylation reduces RNA-editing activity. As to expression, ubiquitously expressed, highest levels were found in brain and lung. Isoform 5 is expressed at higher levels in astrocytomas as compared to normal brain tissue and expression increases strikingly with the severity of the tumor, being higher in the most aggressive tumors.

It is found in the cytoplasm. It localises to the nucleus. The protein localises to the nucleolus. It catalyses the reaction adenosine in double-stranded RNA + H2O + H(+) = inosine in double-stranded RNA + NH4(+). Catalyzes the hydrolytic deamination of adenosine to inosine in double-stranded RNA (dsRNA) referred to as A-to-I RNA editing. This may affect gene expression and function in a number of ways that include mRNA translation by changing codons and hence the amino acid sequence of proteins since the translational machinery read the inosine as a guanosine; pre-mRNA splicing by altering splice site recognition sequences; RNA stability by changing sequences involved in nuclease recognition; genetic stability in the case of RNA virus genomes by changing sequences during viral RNA replication; and RNA structure-dependent activities such as microRNA production or targeting or protein-RNA interactions. Can edit both viral and cellular RNAs and can edit RNAs at multiple sites (hyper-editing) or at specific sites (site-specific editing). Its cellular RNA substrates include: bladder cancer-associated protein (BLCAP), neurotransmitter receptors for glutamate (GRIA2) and serotonin (HTR2C) and GABA receptor (GABRA3). Site-specific RNA editing of transcripts encoding these proteins results in amino acid substitutions which consequently alters their functional activities. Exhibits low-level editing at the GRIA2 Q/R site, but edits efficiently at the R/G site and HOTSPOT1. Its viral RNA substrates include: hepatitis C virus (HCV), vesicular stomatitis virus (VSV), measles virus (MV), hepatitis delta virus (HDV), and human immunodeficiency virus type 1 (HIV-1). Exhibits either a proviral (HDV, MV, VSV and HIV-1) or an antiviral effect (HCV) and this can be editing-dependent (HDV and HCV), editing-independent (VSV and MV) or both (HIV-1). Impairs HCV replication via RNA editing at multiple sites. Enhances the replication of MV, VSV and HIV-1 through an editing-independent mechanism via suppression of EIF2AK2/PKR activation and function. Stimulates both the release and infectivity of HIV-1 viral particles by an editing-dependent mechanism where it associates with viral RNAs and edits adenosines in the 5'UTR and the Rev and Tat coding sequence. Can enhance viral replication of HDV via A-to-I editing at a site designated as amber/W, thereby changing an UAG amber stop codon to an UIG tryptophan (W) codon that permits synthesis of the large delta antigen (L-HDAg) which has a key role in the assembly of viral particles. However, high levels of ADAR1 inhibit HDV replication. The sequence is that of Double-stranded RNA-specific adenosine deaminase (ADAR) from Homo sapiens (Human).